The chain runs to 446 residues: Argininosuccinate lyase (446 aa).

The protein belongs to the lyase 1 family. Argininosuccinate lyase subfamily.

Its subcellular location is the cytoplasm. It catalyses the reaction 2-(N(omega)-L-arginino)succinate = fumarate + L-arginine. Its pathway is amino-acid biosynthesis; L-arginine biosynthesis; L-arginine from L-ornithine and carbamoyl phosphate: step 3/3. This chain is Argininosuccinate lyase, found in Sulfurisphaera tokodaii (strain DSM 16993 / JCM 10545 / NBRC 100140 / 7) (Sulfolobus tokodaii).